We begin with the raw amino-acid sequence, 63 residues long: Large ribosomal subunit protein eL37 (63 aa).

The Zn(2+) site is built by Cys20, Cys23, Cys35, and Cys38. The C4-type zinc-finger motif lies at 20 to 38 (CRRCGRHSFNVRKGYCVAC).

This sequence belongs to the eukaryotic ribosomal protein eL37 family. Zn(2+) is required as a cofactor.

Binds to the 23S rRNA. The polypeptide is Large ribosomal subunit protein eL37 (Ignicoccus hospitalis (strain KIN4/I / DSM 18386 / JCM 14125)).